We begin with the raw amino-acid sequence, 85 residues long: RNA-binding protein Hfq (85 aa).

The Sm domain occupies 9–68 (DPFLNALRRERIPVSIYLVNGIKLQGQIESFDQFVILLKNTVNQMVYKHAISTVVPARPV). Positions 66–85 (RPVNHHHASDRPATLEKTEE) are disordered. The segment covering 72 to 85 (HASDRPATLEKTEE) has biased composition (basic and acidic residues).

Belongs to the Hfq family. Homohexamer.

RNA chaperone that binds small regulatory RNA (sRNAs) and mRNAs to facilitate mRNA translational regulation in response to envelope stress, environmental stress and changes in metabolite concentrations. Also binds with high specificity to tRNAs. The chain is RNA-binding protein Hfq from Photobacterium profundum (strain SS9).